Here is a 336-residue protein sequence, read N- to C-terminus: Phospho-N-acetylmuramoyl-pentapeptide-transferase (336 aa).

The next 10 membrane-spanning stretches (helical) occupy residues L3 to I23, M52 to L72, N79 to L99, L123 to N143, I144 to V164, G175 to A195, F201 to N221, V227 to A247, L255 to F275, and V315 to Y335.

This sequence belongs to the glycosyltransferase 4 family. MraY subfamily. Mg(2+) is required as a cofactor.

It is found in the cell membrane. The catalysed reaction is UDP-N-acetyl-alpha-D-muramoyl-L-alanyl-gamma-D-glutamyl-L-lysyl-D-alanyl-D-alanine + di-trans,octa-cis-undecaprenyl phosphate = Mur2Ac(oyl-L-Ala-gamma-D-Glu-L-Lys-D-Ala-D-Ala)-di-trans,octa-cis-undecaprenyl diphosphate + UMP. It participates in cell wall biogenesis; peptidoglycan biosynthesis. In terms of biological role, catalyzes the initial step of the lipid cycle reactions in the biosynthesis of the cell wall peptidoglycan: transfers peptidoglycan precursor phospho-MurNAc-pentapeptide from UDP-MurNAc-pentapeptide onto the lipid carrier undecaprenyl phosphate, yielding undecaprenyl-pyrophosphoryl-MurNAc-pentapeptide, known as lipid I. This chain is Phospho-N-acetylmuramoyl-pentapeptide-transferase, found in Streptococcus agalactiae serotype Ia (strain ATCC 27591 / A909 / CDC SS700).